A 147-amino-acid polypeptide reads, in one-letter code: Sec-independent protein translocase protein TatB (147 aa).

Residues 2–22 form a helical membrane-spanning segment; it reads FDGIGFMELLLIGVLGLVVLG. Over residues 85-97 the composition is skewed to polar residues; the sequence is QLKQAAQSVNRPY. The disordered stretch occupies residues 85–147; that stretch reads QLKQAAQSVN…DTRSNPKANG (63 aa). The span at 113-133 shows a compositional bias: low complexity; it reads ASQSVSTEASPSASSAPTSES.

The protein belongs to the TatB family. In terms of assembly, the Tat system comprises two distinct complexes: a TatABC complex, containing multiple copies of TatA, TatB and TatC subunits, and a separate TatA complex, containing only TatA subunits. Substrates initially bind to the TatABC complex, which probably triggers association of the separate TatA complex to form the active translocon.

It is found in the cell inner membrane. Part of the twin-arginine translocation (Tat) system that transports large folded proteins containing a characteristic twin-arginine motif in their signal peptide across membranes. Together with TatC, TatB is part of a receptor directly interacting with Tat signal peptides. TatB may form an oligomeric binding site that transiently accommodates folded Tat precursor proteins before their translocation. This chain is Sec-independent protein translocase protein TatB, found in Shewanella sp. (strain ANA-3).